We begin with the raw amino-acid sequence, 1131 residues long: Homeobox-DDT domain protein RLT3 (1131 aa).

The homeobox; TALE-type DNA-binding region spans 2 to 56 (KRKSPLQVQALEGFYLEQMYPTPKEMEDLGKSLGLTLKEVRGWFKRRRSRGKGVK). Residues 239–251 (LQKRSTEKKRRSI) are compositionally biased toward basic residues. The interval 239-264 (LQKRSTEKKRRSIHREAELNKDETQR) is disordered. The segment covering 252-264 (HREAELNKDETQR) has biased composition (basic and acidic residues). Residues 365–424 (PESVKKLFKVVHFLYTYSVTLDIGPFTLDEFTRAFHDKDSLLLGKIHLSLLKLLLLDVET) enclose the DDT domain. Positions 579–609 (EDPDKSQSDSDDSGSVDDESDDCSISSGDEI) are disordered. Positions 587 to 600 (DSDDSGSVDDESDD) are enriched in acidic residues.

It is found in the nucleus. In terms of biological role, transcriptional regulator required for the maintenance of the plant vegetative phase. May prevent the early activation of the vegetative-to-reproductive transition by regulating key genes that contribute to flower timing. This is Homeobox-DDT domain protein RLT3 from Arabidopsis thaliana (Mouse-ear cress).